We begin with the raw amino-acid sequence, 442 residues long: Endothelin receptor type B (442 aa).

The signal sequence occupies residues 1-26; it reads MQPPPSLCGRALVALVLACGLSRIWG. Residues 27–101 are Extracellular-facing; sequence EERGFPPDRA…GSIEIKETFK (75 aa). N-linked (GlcNAc...) asparagine glycosylation is present at Asn59. A disordered region spans residues 69–88; sequence AEVPKGDRTAGSPPRTISPP. A helical transmembrane segment spans residues 102–126; it reads YINTVVSCLVFVLGIIGNSTLLRII. Residues 127–137 are Cytoplasmic-facing; it reads YKNKCMRNGPN. A helical membrane pass occupies residues 138 to 163; the sequence is ILIASLALGDLLHIIIDIPITVYKLL. At 164 to 175 the chain is on the extracellular side; that stretch reads AEDWPFGVEMCK. Residues Cys174 and Cys255 are joined by a disulfide bond. Residues 176–197 form a helical membrane-spanning segment; it reads LVPFIQKASVGITVLSLCALSI. Over 198 to 218 the chain is Cytoplasmic; the sequence is DRYRAVASWSRIKGIGVPKWT. The helical transmembrane segment at 219–243 threads the bilayer; that stretch reads AVEIVLIWVVSVVLAVPEAVGFDMI. Residues 244 to 271 are Extracellular-facing; the sequence is TIDYKGRYLRICLLHPTQKTAFMQFYKT. The chain crosses the membrane as a helical span at residues 272-296; that stretch reads AKDWWLFSFYFCLPLAITAFFYTLM. The Cytoplasmic portion of the chain corresponds to 297 to 324; it reads TCEMLRKKSGMQIALNDHLKQRREVAKT. Ser305 is subject to Phosphoserine. A helical transmembrane segment spans residues 325–350; it reads VFCLVLVFALCWLPLHLSRILKLTIY. Over 351–362 the chain is Extracellular; it reads DQNDPNRCELLS. Residues 363-389 traverse the membrane as a helical segment; it reads FLLVLDYIGINMASLNSCINPIALYLV. At 390-442 the chain is on the cytoplasmic side; that stretch reads SKRFKNCFKSCLCCWCQSFEEKQSLEEKQSCLKFKANDHGYDNFRSSNKYSSS. S-palmitoyl cysteine attachment occurs at residues Cys402, Cys403, and Cys405. The residue at position 419 (Ser419) is a Phosphoserine. A Phosphotyrosine modification is found at Tyr439. Ser440, Ser441, and Ser442 each carry phosphoserine.

This sequence belongs to the G-protein coupled receptor 1 family. Endothelin receptor subfamily. EDNRB sub-subfamily.

The protein localises to the cell membrane. Its function is as follows. Non-specific receptor for endothelin 1, 2, and 3. Mediates its action by association with G proteins that activate a phosphatidylinositol-calcium second messenger system. The protein is Endothelin receptor type B (EDNRB) of Canis lupus familiaris (Dog).